The primary structure comprises 70 residues: Protein SlyX homolog (70 aa).

Belongs to the SlyX family.

The chain is Protein SlyX homolog from Nitrobacter winogradskyi (strain ATCC 25391 / DSM 10237 / CIP 104748 / NCIMB 11846 / Nb-255).